The sequence spans 214 residues: Protein-L-isoaspartate O-methyltransferase 1 (214 aa).

Serine 62 is a catalytic residue.

This sequence belongs to the methyltransferase superfamily. L-isoaspartyl/D-aspartyl protein methyltransferase family.

It localises to the cytoplasm. It catalyses the reaction [protein]-L-isoaspartate + S-adenosyl-L-methionine = [protein]-L-isoaspartate alpha-methyl ester + S-adenosyl-L-homocysteine. Its function is as follows. Catalyzes the methyl esterification of L-isoaspartyl residues in peptides and proteins that result from spontaneous decomposition of normal L-aspartyl and L-asparaginyl residues. It plays a role in the repair and/or degradation of damaged proteins. The protein is Protein-L-isoaspartate O-methyltransferase 1 of Syntrophobacter fumaroxidans (strain DSM 10017 / MPOB).